Here is a 386-residue protein sequence, read N- to C-terminus: Cell division protein FtsZ (386 aa).

GTP contacts are provided by residues 20–24, 107–109, Glu-138, Arg-142, and Asn-186; these read GGGGN and GTG. The disordered stretch occupies residues 350–377; it reads LNQEQKTAAKAVNEQNAQGSKEPDYLDI.

The protein belongs to the FtsZ family. As to quaternary structure, homodimer. Polymerizes to form a dynamic ring structure in a strictly GTP-dependent manner. Interacts directly with several other division proteins.

The protein localises to the cytoplasm. Essential cell division protein that forms a contractile ring structure (Z ring) at the future cell division site. The regulation of the ring assembly controls the timing and the location of cell division. One of the functions of the FtsZ ring is to recruit other cell division proteins to the septum to produce a new cell wall between the dividing cells. Binds GTP and shows GTPase activity. This Sodalis glossinidius protein is Cell division protein FtsZ.